Here is a 163-residue protein sequence, read N- to C-terminus: 2-C-methyl-D-erythritol 2,4-cyclodiphosphate synthase (163 aa).

Positions 12 and 14 each coordinate a divalent metal cation. 4-CDP-2-C-methyl-D-erythritol 2-phosphate contacts are provided by residues aspartate 12–histidine 14 and histidine 38–serine 39. Histidine 46 is an a divalent metal cation binding site. Residues aspartate 60–glycine 62, threonine 136–glutamate 139, phenylalanine 143, and arginine 146 contribute to the 4-CDP-2-C-methyl-D-erythritol 2-phosphate site.

It belongs to the IspF family. Homotrimer. Requires a divalent metal cation as cofactor.

The enzyme catalyses 4-CDP-2-C-methyl-D-erythritol 2-phosphate = 2-C-methyl-D-erythritol 2,4-cyclic diphosphate + CMP. Its pathway is isoprenoid biosynthesis; isopentenyl diphosphate biosynthesis via DXP pathway; isopentenyl diphosphate from 1-deoxy-D-xylulose 5-phosphate: step 4/6. Its function is as follows. Involved in the biosynthesis of isopentenyl diphosphate (IPP) and dimethylallyl diphosphate (DMAPP), two major building blocks of isoprenoid compounds. Catalyzes the conversion of 4-diphosphocytidyl-2-C-methyl-D-erythritol 2-phosphate (CDP-ME2P) to 2-C-methyl-D-erythritol 2,4-cyclodiphosphate (ME-CPP) with a corresponding release of cytidine 5-monophosphate (CMP). The protein is 2-C-methyl-D-erythritol 2,4-cyclodiphosphate synthase of Xanthomonas campestris pv. campestris (strain 8004).